The sequence spans 554 residues: Hydroxylamine reductase (554 aa).

[2Fe-2S] cluster is bound by residues cysteine 3, cysteine 6, cysteine 18, and cysteine 25. Residues histidine 252, glutamate 276, cysteine 320, cysteine 408, cysteine 436, cysteine 461, glutamate 495, and lysine 497 each coordinate hybrid [4Fe-2O-2S] cluster. Cysteine 408 carries the cysteine persulfide modification.

The protein belongs to the HCP family. It depends on [2Fe-2S] cluster as a cofactor. Hybrid [4Fe-2O-2S] cluster serves as cofactor.

It is found in the cytoplasm. It carries out the reaction A + NH4(+) + H2O = hydroxylamine + AH2 + H(+). In terms of biological role, catalyzes the reduction of hydroxylamine to form NH(3) and H(2)O. The sequence is that of Hydroxylamine reductase from Shewanella putrefaciens (strain CN-32 / ATCC BAA-453).